We begin with the raw amino-acid sequence, 416 residues long: Enolase (416 aa).

(2R)-2-phosphoglycerate is bound at residue Q160. E204 serves as the catalytic Proton donor. Mg(2+)-binding residues include D239, E280, and D306. K331, R360, S361, and K382 together coordinate (2R)-2-phosphoglycerate. K331 functions as the Proton acceptor in the catalytic mechanism.

It belongs to the enolase family. Requires Mg(2+) as cofactor.

The protein resides in the cytoplasm. It is found in the secreted. It localises to the cell surface. The enzyme catalyses (2R)-2-phosphoglycerate = phosphoenolpyruvate + H2O. It functions in the pathway carbohydrate degradation; glycolysis; pyruvate from D-glyceraldehyde 3-phosphate: step 4/5. Its function is as follows. Catalyzes the reversible conversion of 2-phosphoglycerate (2-PG) into phosphoenolpyruvate (PEP). It is essential for the degradation of carbohydrates via glycolysis. This chain is Enolase, found in Sulfolobus acidocaldarius (strain ATCC 33909 / DSM 639 / JCM 8929 / NBRC 15157 / NCIMB 11770).